The sequence spans 281 residues: sn-glycerol-3-phosphate transport system permease protein UgpE (281 aa).

6 consecutive transmembrane segments (helical) span residues Leu-16 to Leu-36, Phe-85 to Phe-105, Phe-113 to Val-133, Leu-142 to Phe-162, Ala-202 to Ile-222, and Trp-247 to Ala-267. Residues Met-77 to Met-268 form the ABC transmembrane type-1 domain.

The protein belongs to the binding-protein-dependent transport system permease family. UgpAE subfamily. In terms of assembly, the complex is composed of two ATP-binding proteins (UgpC), two transmembrane proteins (UgpA and UgpE) and a solute-binding protein (UgpB).

Its subcellular location is the cell inner membrane. In terms of biological role, part of the ABC transporter complex UgpBAEC involved in sn-glycerol-3-phosphate (G3P) import. Probably responsible for the translocation of the substrate across the membrane. This is sn-glycerol-3-phosphate transport system permease protein UgpE (ugpE) from Salmonella choleraesuis (strain SC-B67).